A 289-amino-acid chain; its full sequence is Inorganic pyrophosphatase (289 aa).

N-acetylserine is present on Ser-2. Residue Lys-57 is modified to N6-acetyllysine. Residues Asp-116, Asp-121, and Asp-153 each contribute to the Mg(2+) site. Lys-228 bears the N6-acetyllysine mark. Ser-250 is modified (phosphoserine).

Belongs to the PPase family. As to quaternary structure, homodimer. The cofactor is Mg(2+).

The protein localises to the cytoplasm. It catalyses the reaction diphosphate + H2O = 2 phosphate + H(+). In Pongo abelii (Sumatran orangutan), this protein is Inorganic pyrophosphatase (PPA1).